Reading from the N-terminus, the 235-residue chain is Probable septum site-determining protein MinC (235 aa).

Residues 104–125 (KAVRPAPVEPATPSEPPQNANP) form a disordered region. A compositionally biased stretch (pro residues) spans 110-119 (PVEPATPSEP).

This sequence belongs to the MinC family. In terms of assembly, interacts with MinD and FtsZ.

Functionally, cell division inhibitor that blocks the formation of polar Z ring septums. Rapidly oscillates between the poles of the cell to destabilize FtsZ filaments that have formed before they mature into polar Z rings. Prevents FtsZ polymerization. This Salmonella enteritidis PT4 (strain P125109) protein is Probable septum site-determining protein MinC.